Reading from the N-terminus, the 608-residue chain is uncharacterized protein (608 aa).

Residues 1 to 21 (MHTNSPLRADNQDLETQPLLR) form a disordered region. Residue threonine 24 is modified to Phosphothreonine. Phosphoserine is present on serine 27. The helical transmembrane segment at 55–75 (IIYLLGIVLLSFFGVSIVQYI) threads the bilayer. Asparagine 115, asparagine 141, asparagine 169, asparagine 407, asparagine 425, asparagine 449, asparagine 453, asparagine 527, and asparagine 580 each carry an N-linked (GlcNAc...) asparagine glycan.

Its subcellular location is the membrane. This is an uncharacterized protein from Saccharomyces cerevisiae (strain ATCC 204508 / S288c) (Baker's yeast).